Here is an 89-residue protein sequence, read N- to C-terminus: Otospiralin (89 aa).

Positions 1-21 (MQPCVLWWLALGLLLGIPAGA) are cleaved as a signal peptide.

It belongs to the otospiralin family. In terms of tissue distribution, ear specific. Expressed in the cochlea and vestibule, but not in the cochlear nerve, cochlear nucleus, spinal chord, muscle, cerebral cortex, cerebellum, diencephalon and olfactory bulb. In the cochlea, expressed in fibrocytes of the spiral limbus, spiral ligament and suprastrial zone. In the vestibule, expressed in cells located to the stroma below the macular and crista sensory epithelia and in the subepithelial layer of the walls of semicircular canals and maculae.

The protein resides in the secreted. May be essential for the survival of the neurosensory epithelium of the inner ear. The protein is Otospiralin (Otos) of Rattus norvegicus (Rat).